A 142-amino-acid polypeptide reads, in one-letter code: Large ribosomal subunit protein uL13 (142 aa).

Belongs to the universal ribosomal protein uL13 family. As to quaternary structure, part of the 50S ribosomal subunit.

In terms of biological role, this protein is one of the early assembly proteins of the 50S ribosomal subunit, although it is not seen to bind rRNA by itself. It is important during the early stages of 50S assembly. This Chromobacterium violaceum (strain ATCC 12472 / DSM 30191 / JCM 1249 / CCUG 213 / NBRC 12614 / NCIMB 9131 / NCTC 9757 / MK) protein is Large ribosomal subunit protein uL13.